The following is a 425-amino-acid chain: D-tagatose 6-phosphate 4-epimerase (425 aa).

The protein belongs to the GatZ/KbaZ family.

It carries out the reaction keto-D-tagatose 6-phosphate = keto-D-fructose 6-phosphate. The protein operates within carbohydrate metabolism. Involved in galactitol and D-altritol catabolism. Catalyzes the epimerization of D-tagatose 6-phosphate to D-fructose 6-phosphate. The sequence is that of D-tagatose 6-phosphate 4-epimerase from Agrobacterium fabrum (strain C58 / ATCC 33970) (Agrobacterium tumefaciens (strain C58)).